The sequence spans 491 residues: Katanin p60 ATPase-containing subunit A1 (491 aa).

The interval 1–29 (MSLLMITENVKLAREYALLGNYDSAMVYY) is interaction with KATNB1. Positions 1–75 (MSLLMITENV…VKEIMKTLES (75 aa)) are interaction with dynein and NDEL1. The segment at 1 to 185 (MSLLMITENV…EPEANKFDST (185 aa)) is interaction with microtubules. At serine 42 the chain carries Phosphoserine; by DYRK2. Positions 87–183 (QHELPSSEGE…VTEPEANKFD (97 aa)) are disordered. Positions 145–169 (HSDRGKAVRSREKKEQSKGREEKNK) are enriched in basic and acidic residues. 249–256 (GPPGTGKT) provides a ligand contact to ATP.

Belongs to the AAA ATPase family. Katanin p60 subunit A1 subfamily. As to quaternary structure, can homooligomerize into hexameric rings, which may be promoted by interaction with microtubules. Interacts with KATNB1, which may serve as a targeting subunit. Interacts with ASPM; the katanin complex formation KATNA1:KATNB1 is required for the association of ASPM. Interacts with dynein and NDEL1. Associates with the E3 ligase complex containing DYRK2, EDD/UBR5, DDB1 and DCAF1 proteins (EDVP complex). Interacts with KLHL42 (via the kelch domains). Interacts with CUL3; the interaction is enhanced by KLHL42. Interacts with KATNB1 and KATNBL1. Phosphorylation by DYRK2 triggers ubiquitination and subsequent degradation. Post-translationally, ubiquitinated by the BCR(KLHL42) E3 ubiquitin ligase complex, leading to its proteasomal degradation. Ubiquitinated by the EDVP E3 ligase complex and subsequently targeted for proteasomal degradation.

The protein resides in the cytoplasm. The protein localises to the midbody. It localises to the cytoskeleton. It is found in the microtubule organizing center. Its subcellular location is the centrosome. The protein resides in the spindle pole. The protein localises to the spindle. It catalyses the reaction n ATP + n H2O + a microtubule = n ADP + n phosphate + (n+1) alpha/beta tubulin heterodimers.. With respect to regulation, ATPase activity is stimulated by microtubules, which promote homooligomerization. ATP-dependent microtubule severing is stimulated by interaction with KATNB1. Catalytic subunit of a complex which severs microtubules in an ATP-dependent manner. Microtubule severing may promote rapid reorganization of cellular microtubule arrays and the release of microtubules from the centrosome following nucleation. Microtubule release from the mitotic spindle poles may allow depolymerization of the microtubule end proximal to the spindle pole, leading to poleward microtubule flux and poleward motion of chromosome. Microtubule release within the cell body of neurons may be required for their transport into neuronal processes by microtubule-dependent motor proteins. This transport is required for axonal growth. The sequence is that of Katanin p60 ATPase-containing subunit A1 (Katna1) from Rattus norvegicus (Rat).